The sequence spans 250 residues: AA9 family lytic polysaccharide monooxygenase AA17 (250 aa).

A signal peptide spans 1–21 (MAMSKIVSLTGLLASASLVAG). His22 and His107 together coordinate Cu(2+). Intrachain disulfides connect Cys77/Cys199 and Cys118/Cys122. A glycan (N-linked (GlcNAc...) asparagine) is linked at Asn159. His185 and Gln194 together coordinate O2. Tyr196 is a binding site for Cu(2+).

This sequence belongs to the polysaccharide monooxygenase AA9 family. Cu(2+) serves as cofactor.

It is found in the secreted. In terms of biological role, lytic polysaccharide monooxygenase (LPMO) that exhibits oxidative cleavage beta-O-4 linkage of lignin resulting in the formation of aromatic compound guaiacol. Catalysis by LPMOs requires the reduction of the active-site copper from Cu(II) to Cu(I) by a reducing agent and H(2)O(2) or O(2) as a cosubstrate. Does not use cellulose, cello-oligosaccharides, xyloglucan, xylan, chitin nor starch as substrates. Able to depolymerize the lignin dimer guaicyl glycerol beta-guaicyl ether (GGE). In Aspergillus oryzae (strain ATCC 42149 / RIB 40) (Yellow koji mold), this protein is AA9 family lytic polysaccharide monooxygenase AA17.